Reading from the N-terminus, the 404-residue chain is Tryptophan synthase beta chain (404 aa).

Lys98 carries the N6-(pyridoxal phosphate)lysine modification.

It belongs to the TrpB family. In terms of assembly, tetramer of two alpha and two beta chains. It depends on pyridoxal 5'-phosphate as a cofactor.

It catalyses the reaction (1S,2R)-1-C-(indol-3-yl)glycerol 3-phosphate + L-serine = D-glyceraldehyde 3-phosphate + L-tryptophan + H2O. Its pathway is amino-acid biosynthesis; L-tryptophan biosynthesis; L-tryptophan from chorismate: step 5/5. In terms of biological role, the beta subunit is responsible for the synthesis of L-tryptophan from indole and L-serine. The chain is Tryptophan synthase beta chain from Rhodopseudomonas palustris (strain BisB18).